Reading from the N-terminus, the 169-residue chain is Putative tRNA (cytidine(34)-2'-O)-methyltransferase (169 aa).

I79, G104, I125, and S133 together coordinate S-adenosyl-L-methionine.

The protein belongs to the class IV-like SAM-binding methyltransferase superfamily. RNA methyltransferase TrmH family. TrmL subfamily.

Its subcellular location is the cytoplasm. The enzyme catalyses cytidine(34) in tRNA + S-adenosyl-L-methionine = 2'-O-methylcytidine(34) in tRNA + S-adenosyl-L-homocysteine + H(+). It carries out the reaction 5-carboxymethylaminomethyluridine(34) in tRNA(Leu) + S-adenosyl-L-methionine = 5-carboxymethylaminomethyl-2'-O-methyluridine(34) in tRNA(Leu) + S-adenosyl-L-homocysteine + H(+). Functionally, could methylate the ribose at the nucleotide 34 wobble position in tRNA. The protein is Putative tRNA (cytidine(34)-2'-O)-methyltransferase of Listeria innocua serovar 6a (strain ATCC BAA-680 / CLIP 11262).